The sequence spans 366 residues: GTP-binding protein 10 (366 aa).

One can recognise an Obg domain in the interval 13-148; that stretch reads GNFIDNLRIF…RIVHLDLKVI (136 aa). The region spanning 149 to 344 is the OBG-type G domain; that stretch reads ADVGLVGFPN…LKSCIRKALD (196 aa). GTP-binding positions include 155–162, 202–206, and 278–281; these read GFPNAGKS, DLPGL, and NKMD. The segment covering 346–355 has biased composition (basic and acidic residues); that stretch reads QDGKESDAHR. The segment at 346 to 366 is disordered; that stretch reads QDGKESDAHRSKQLLNLQSSS.

Belongs to the TRAFAC class OBG-HflX-like GTPase superfamily. OBG GTPase family.

Its subcellular location is the nucleus. The protein localises to the nucleolus. May be involved in the ribosome maturation process. The protein is GTP-binding protein 10 (Gtpbp10) of Mus musculus (Mouse).